The following is a 396-amino-acid chain: Elongation factor Tu (396 aa).

A tr-type G domain is found at 10 to 206 (KPHVNVGTIG…ALDTYIPEPE (197 aa)). Residues 19-26 (GHVDHGKT) are G1. 19 to 26 (GHVDHGKT) provides a ligand contact to GTP. Thr-26 provides a ligand contact to Mg(2+). A G2 region spans residues 60–64 (GITIN). The segment at 81-84 (DCPG) is G3. GTP is bound by residues 81-85 (DCPGH) and 136-139 (NKAD). The G4 stretch occupies residues 136–139 (NKAD). Positions 174–176 (SAL) are G5.

Belongs to the TRAFAC class translation factor GTPase superfamily. Classic translation factor GTPase family. EF-Tu/EF-1A subfamily. Monomer.

The protein resides in the cytoplasm. It catalyses the reaction GTP + H2O = GDP + phosphate + H(+). GTP hydrolase that promotes the GTP-dependent binding of aminoacyl-tRNA to the A-site of ribosomes during protein biosynthesis. This Thiobacillus denitrificans (strain ATCC 25259 / T1) protein is Elongation factor Tu.